Reading from the N-terminus, the 148-residue chain is Ribonuclease pancreatic (148 aa).

The N-terminal stretch at 1 to 25 (MGLEKSLILFPLLVLVVGWVQPSLG) is a signal peptide. Residues lysine 32, arginine 35, 65 to 69 (KPVNT), lysine 90, and arginine 109 contribute to the substrate site. 4 disulfides stabilise this stretch: cysteine 50–cysteine 108, cysteine 64–cysteine 119, cysteine 82–cysteine 134, and cysteine 89–cysteine 96. Catalysis depends on histidine 143, which acts as the Proton donor.

This sequence belongs to the pancreatic ribonuclease family. In terms of assembly, monomer. Interacts with and forms tight 1:1 complexes with RNH1. Dimerization of two such complexes may occur. Interaction with RNH1 inhibits this protein. Pancreas.

Its subcellular location is the secreted. The enzyme catalyses an [RNA] containing cytidine + H2O = an [RNA]-3'-cytidine-3'-phosphate + a 5'-hydroxy-ribonucleotide-3'-[RNA].. It catalyses the reaction an [RNA] containing uridine + H2O = an [RNA]-3'-uridine-3'-phosphate + a 5'-hydroxy-ribonucleotide-3'-[RNA].. Functionally, endonuclease that catalyzes the cleavage of RNA on the 3' side of pyrimidine nucleotides. Acts on single-stranded and double-stranded RNA. The chain is Ribonuclease pancreatic (RNASE1) from Peromyscus leucopus (White-footed mouse).